The primary structure comprises 313 residues: Biotin synthase (313 aa).

The 227-residue stretch at 37–263 folds into the Radical SAM core domain; sequence YYGKKVKLNM…INPTKEIRIA (227 aa). C55, C59, and C62 together coordinate [4Fe-4S] cluster. Positions 98, 131, 191, and 261 each coordinate [2Fe-2S] cluster.

Belongs to the radical SAM superfamily. Biotin synthase family. In terms of assembly, homodimer. The cofactor is [4Fe-4S] cluster. [2Fe-2S] cluster serves as cofactor.

The enzyme catalyses (4R,5S)-dethiobiotin + (sulfur carrier)-SH + 2 reduced [2Fe-2S]-[ferredoxin] + 2 S-adenosyl-L-methionine = (sulfur carrier)-H + biotin + 2 5'-deoxyadenosine + 2 L-methionine + 2 oxidized [2Fe-2S]-[ferredoxin]. The protein operates within cofactor biosynthesis; biotin biosynthesis; biotin from 7,8-diaminononanoate: step 2/2. Catalyzes the conversion of dethiobiotin (DTB) to biotin by the insertion of a sulfur atom into dethiobiotin via a radical-based mechanism. The sequence is that of Biotin synthase from Staphylococcus epidermidis (strain ATCC 12228 / FDA PCI 1200).